We begin with the raw amino-acid sequence, 410 residues long: Probable tRNA sulfurtransferase (410 aa).

In terms of domain architecture, THUMP spans 58–167; that stretch reads AELTRRLQEV…RREIFVSVER (110 aa). Residues 185–186, 210–211, Arg-267, Gly-289, and Gln-298 each bind ATP; these read LL and HF.

Belongs to the ThiI family.

It localises to the cytoplasm. It catalyses the reaction [ThiI sulfur-carrier protein]-S-sulfanyl-L-cysteine + a uridine in tRNA + 2 reduced [2Fe-2S]-[ferredoxin] + ATP + H(+) = [ThiI sulfur-carrier protein]-L-cysteine + a 4-thiouridine in tRNA + 2 oxidized [2Fe-2S]-[ferredoxin] + AMP + diphosphate. The enzyme catalyses [ThiS sulfur-carrier protein]-C-terminal Gly-Gly-AMP + S-sulfanyl-L-cysteinyl-[cysteine desulfurase] + AH2 = [ThiS sulfur-carrier protein]-C-terminal-Gly-aminoethanethioate + L-cysteinyl-[cysteine desulfurase] + A + AMP + 2 H(+). The protein operates within cofactor biosynthesis; thiamine diphosphate biosynthesis. Its function is as follows. Catalyzes the ATP-dependent transfer of a sulfur to tRNA to produce 4-thiouridine in position 8 of tRNAs, which functions as a near-UV photosensor. Also catalyzes the transfer of sulfur to the sulfur carrier protein ThiS, forming ThiS-thiocarboxylate. This is a step in the synthesis of thiazole, in the thiamine biosynthesis pathway. The sulfur is donated as persulfide by IscS. This chain is Probable tRNA sulfurtransferase, found in Nocardia farcinica (strain IFM 10152).